The sequence spans 390 residues: Zinc finger CCCH domain-containing protein 46 (390 aa).

The segment at 2–29 adopts a C3H1-type zinc-finger fold; it reads SRRQEICRNFQRGSCKYGAQCRYLHASP. A disordered region spans residues 27 to 129; sequence ASPHQQQQQQ…AAHTSCEDPQ (103 aa). Over residues 48–76 the composition is skewed to low complexity; that stretch reads GSRQQQQPSFGSQFQQQQQQQQKPNPFGF. The segment covering 106-129 has biased composition (polar residues); the sequence is PTKQTEAVQPPQAQAAHTSCEDPQ. Residues 146-211 form a required for transcriptional activation activity region; the sequence is WKLTCYAHLR…FTNLLNSARP (66 aa). Over residues 230–248 the composition is skewed to polar residues; it reads SSFGASQTNGPPVFSSFSQ. The interval 230 to 284 is disordered; sequence SSFGASQTNGPPVFSSFSQIGAATNIGPGPGTTAPGMPASSPFGHPSSAPLAAPT. A compositionally biased stretch (low complexity) spans 250–268; it reads GAATNIGPGPGTTAPGMPA.

As to quaternary structure, interacts with GSK1 and GSK4. In terms of processing, phosphorylated on serine and threonine residues by GSK1. Phosphorylation represses nuclear localization. As to expression, expressed in the adaxial face of the collar, nodes and the basal region of elongating internodes.

The protein resides in the nucleus. It localises to the cytoplasm. In terms of biological role, transcriptional activator that binds double-stranded DNA and the single-stranded RNA polymers poly(rA), poly(rU) and poly(rG), but not poly(rC). Mediates optimal plant architecture through brassinosteroid (BR) signaling. May act as a negative regulator in sterol homeostasis. Acts as a negative regulator of BR signaling. Binds to the specific DNA sequence 5'-CTCGC-3' of BZR1 promoter and negatively regulates BZR1. Acts as an antagonistic transcription factor of BZR1 to attenuate the BR signaling pathway and regulate leaf bending. Represses the expression of ILI1, and activates that of IBH1 to balance the regulation activity of BZR1. In Oryza sativa subsp. japonica (Rice), this protein is Zinc finger CCCH domain-containing protein 46.